A 129-amino-acid chain; its full sequence is Small ribosomal subunit protein uS9 (129 aa).

Belongs to the universal ribosomal protein uS9 family.

This Gemmatimonas aurantiaca (strain DSM 14586 / JCM 11422 / NBRC 100505 / T-27) protein is Small ribosomal subunit protein uS9.